Here is a 405-residue protein sequence, read N- to C-terminus: Imidazolonepropionase (405 aa).

Fe(3+) is bound by residues histidine 72 and histidine 74. Zn(2+)-binding residues include histidine 72 and histidine 74. 4-imidazolone-5-propanoate contacts are provided by arginine 81, tyrosine 144, and histidine 177. Residue tyrosine 144 coordinates N-formimidoyl-L-glutamate. Histidine 242 contributes to the Fe(3+) binding site. Histidine 242 serves as a coordination point for Zn(2+). Glutamine 245 contributes to the 4-imidazolone-5-propanoate binding site. Aspartate 317 is a binding site for Fe(3+). Zn(2+) is bound at residue aspartate 317. Asparagine 319 and glycine 321 together coordinate N-formimidoyl-L-glutamate. Residue threonine 322 participates in 4-imidazolone-5-propanoate binding.

Belongs to the metallo-dependent hydrolases superfamily. HutI family. It depends on Zn(2+) as a cofactor. The cofactor is Fe(3+).

The protein localises to the cytoplasm. It carries out the reaction 4-imidazolone-5-propanoate + H2O = N-formimidoyl-L-glutamate. Its pathway is amino-acid degradation; L-histidine degradation into L-glutamate; N-formimidoyl-L-glutamate from L-histidine: step 3/3. Functionally, catalyzes the hydrolytic cleavage of the carbon-nitrogen bond in imidazolone-5-propanoate to yield N-formimidoyl-L-glutamate. It is the third step in the universal histidine degradation pathway. The chain is Imidazolonepropionase from Klebsiella pneumoniae (strain 342).